Consider the following 311-residue polypeptide: 4-diphosphocytidyl-2-C-methyl-D-erythritol kinase (311 aa).

The active site involves K16. Residue 100 to 110 (PIGAGLAGGSS) participates in ATP binding. Residue D142 is part of the active site.

The protein belongs to the GHMP kinase family. IspE subfamily.

The enzyme catalyses 4-CDP-2-C-methyl-D-erythritol + ATP = 4-CDP-2-C-methyl-D-erythritol 2-phosphate + ADP + H(+). The protein operates within isoprenoid biosynthesis; isopentenyl diphosphate biosynthesis via DXP pathway; isopentenyl diphosphate from 1-deoxy-D-xylulose 5-phosphate: step 3/6. Its function is as follows. Catalyzes the phosphorylation of the position 2 hydroxy group of 4-diphosphocytidyl-2C-methyl-D-erythritol. This Prochlorococcus marinus (strain MIT 9301) protein is 4-diphosphocytidyl-2-C-methyl-D-erythritol kinase.